Consider the following 127-residue polypeptide: Large ribosomal subunit protein eL8 (127 aa).

Belongs to the eukaryotic ribosomal protein eL8 family. Part of the 50S ribosomal subunit. Probably part of the RNase P complex.

The protein resides in the cytoplasm. In terms of biological role, multifunctional RNA-binding protein that recognizes the K-turn motif in ribosomal RNA, the RNA component of RNase P, box H/ACA, box C/D and box C'/D' sRNAs. The protein is Large ribosomal subunit protein eL8 of Desulfurococcus amylolyticus (strain DSM 18924 / JCM 16383 / VKM B-2413 / 1221n) (Desulfurococcus kamchatkensis).